The chain runs to 531 residues: Membrane protein insertase YidC (531 aa).

Transmembrane regions (helical) follow at residues Ala-5–Pro-25, Gly-343–Leu-363, Leu-415–Ile-435, and Pro-489–Val-509.

It belongs to the OXA1/ALB3/YidC family. Type 1 subfamily. In terms of assembly, interacts with the Sec translocase complex via SecD. Specifically interacts with transmembrane segments of nascent integral membrane proteins during membrane integration.

It localises to the cell inner membrane. Its function is as follows. Required for the insertion and/or proper folding and/or complex formation of integral membrane proteins into the membrane. Involved in integration of membrane proteins that insert both dependently and independently of the Sec translocase complex, as well as at least some lipoproteins. Aids folding of multispanning membrane proteins. In Geobacter sulfurreducens (strain ATCC 51573 / DSM 12127 / PCA), this protein is Membrane protein insertase YidC.